The primary structure comprises 340 residues: DNA polymerase III subunit delta' (340 aa).

As to quaternary structure, the DNA polymerase holoenzyme is a complex that contains 10 different types of subunits. These subunits are organized into 3 functionally essential subassemblies: the pol III core, the beta sliding clamp processivity factor and the clamp-loading complex. The pol III core (subunits alpha,epsilon and theta) contains the polymerase and the 3'-5' exonuclease proofreading activities. The polymerase is tethered to the template via the sliding clamp processivity factor. The clamp-loading complex assembles the beta processivity factor onto the primer template and plays a central role in the organization and communication at the replication fork. This complex contains delta, delta', psi and chi, and copies of either or both of two different DnaX proteins, gamma and tau. The composition of the holoenzyme is, therefore: (alpha,epsilon,theta)[2]-(gamma/tau)[3]-delta,delta', psi,chi-beta[4].

The catalysed reaction is DNA(n) + a 2'-deoxyribonucleoside 5'-triphosphate = DNA(n+1) + diphosphate. DNA polymerase III is a complex, multichain enzyme responsible for most of the replicative synthesis in bacteria. This DNA polymerase also exhibits 3' to 5' exonuclease activity. The chain is DNA polymerase III subunit delta' (holB) from Yersinia pestis.